Consider the following 652-residue polypeptide: UvrABC system protein C (652 aa).

A GIY-YIG domain is found at 20 to 99 (PEPGCYLMRD…IKNHQPHFNV (80 aa)). The UVR domain occupies 209-244 (DELQRLLDEQMNRYAERLDFESAARVRDQLQGLDQL).

The protein belongs to the UvrC family. In terms of assembly, interacts with UvrB in an incision complex.

It localises to the cytoplasm. Functionally, the UvrABC repair system catalyzes the recognition and processing of DNA lesions. UvrC both incises the 5' and 3' sides of the lesion. The N-terminal half is responsible for the 3' incision and the C-terminal half is responsible for the 5' incision. This is UvrABC system protein C from Parasynechococcus marenigrum (strain WH8102).